The sequence spans 126 residues: Major sperm protein 2 (126 aa).

A2 is subject to N-acetylalanine. The 118-residue stretch at 8-125 (DIATMPNQKV…RRKNLPIEYN (118 aa)) folds into the MSP domain.

As to expression, sperm.

The protein localises to the cell projection. It localises to the pseudopodium. The protein resides in the cytoplasm. Its subcellular location is the cytoskeleton. In terms of biological role, central component in molecular interactions underlying sperm crawling. Forms an extensive filament system that extends from sperm villipoda, along the leading edge of the pseudopod. In Globodera rostochiensis (Golden nematode worm), this protein is Major sperm protein 2 (MSP-2).